Here is a 617-residue protein sequence, read N- to C-terminus: Phenylalanine--tRNA ligase beta subunit (617 aa).

Positions 306–383 constitute a B5 domain; that stretch reads IQEKQINAQV…IGYGYDNLKK (78 aa). Residues Asp-361, Asp-367, Glu-370, and Asp-371 each contribute to the Mg(2+) site.

Belongs to the phenylalanyl-tRNA synthetase beta subunit family. Type 2 subfamily. In terms of assembly, tetramer of two alpha and two beta subunits. Requires Mg(2+) as cofactor.

The protein resides in the cytoplasm. It catalyses the reaction tRNA(Phe) + L-phenylalanine + ATP = L-phenylalanyl-tRNA(Phe) + AMP + diphosphate + H(+). The polypeptide is Phenylalanine--tRNA ligase beta subunit (phesB) (Dictyostelium discoideum (Social amoeba)).